The following is a 60-amino-acid chain: Cytotoxin 4 (60 aa).

4 disulfides stabilise this stretch: cysteine 3–cysteine 21, cysteine 14–cysteine 38, cysteine 42–cysteine 53, and cysteine 54–cysteine 59.

This sequence belongs to the three-finger toxin family. Short-chain subfamily. Type IA cytotoxin sub-subfamily. Monomer in solution; Homodimer and oligomer in the presence of negatively charged lipids forming a pore with a size ranging between 20 and 30 Angstroms. In terms of tissue distribution, expressed by the venom gland.

The protein resides in the secreted. It is found in the target cell membrane. In terms of biological role, shows cytolytic activity on many different cells by forming pore in lipid membranes. In vivo, increases heart rate or kills the animal by cardiac arrest. In addition, it binds to heparin with high affinity, interacts with Kv channel-interacting protein 1 (KCNIP1) in a calcium-independent manner, and binds to integrin alpha-V/beta-3 (ITGAV/ITGB3) with moderate affinity. The polypeptide is Cytotoxin 4 (Naja annulifera (Banded Egyptian cobra)).